A 229-amino-acid polypeptide reads, in one-letter code: Large ribosomal subunit protein uL1 (229 aa).

Belongs to the universal ribosomal protein uL1 family. In terms of assembly, part of the 50S ribosomal subunit.

Its function is as follows. Binds directly to 23S rRNA. The L1 stalk is quite mobile in the ribosome, and is involved in E site tRNA release. In terms of biological role, protein L1 is also a translational repressor protein, it controls the translation of the L11 operon by binding to its mRNA. In Clostridium beijerinckii (strain ATCC 51743 / NCIMB 8052) (Clostridium acetobutylicum), this protein is Large ribosomal subunit protein uL1.